Reading from the N-terminus, the 737-residue chain is FYVE, RhoGEF and PH domain-containing protein 3 (737 aa).

The segment at 1–151 is disordered; that stretch reads MESGGGSSTP…KADKDAGLAQ (151 aa). The segment covering 126 to 136 has biased composition (acidic residues); the sequence is ADSDVGEEPDS. Position 128 is a phosphoserine (Ser-128). A DH domain is found at 157–341; the sequence is KLLHIAQELL…STAANHSNAA (185 aa). The region spanning 370–469 is the PH 1 domain; that stretch reads ELIKEGQIQK…WIQIIQATIE (100 aa). Residues 487-533 are disordered; that stretch reads QDEDPSLSPDMPITSTSPVEPVVTTEGGSGAAGLEPRKLSSKTRRDK. The segment covering 500–512 has biased composition (low complexity); that stretch reads TSTSPVEPVVTTE. The segment covering 521–533 has biased composition (basic and acidic residues); that stretch reads EPRKLSSKTRRDK. The FYVE-type zinc finger occupies 532 to 588; that stretch reads DKEKQSCKSCGETFNSITKRRHHCKLCGVVICGKCSEFKAENSRQSRVCRECFLTQP. 8 residues coordinate Zn(2+): Cys-538, Cys-541, Cys-555, Cys-558, Cys-563, Cys-566, Cys-580, and Cys-583. Disordered regions lie at residues 589-620 and 713-737; these read VAPE…SLLC and AARG…AAAP. The PH 2 domain occupies 616–715; it reads PSLLCGPLRL…WLETLSTAAR (100 aa).

It is found in the cytoplasm. Its subcellular location is the cytoskeleton. Promotes the formation of filopodia. May activate CDC42, a member of the Ras-like family of Rho- and Rac proteins, by exchanging bound GDP for free GTP. Plays a role in regulating the actin cytoskeleton and cell shape. This is FYVE, RhoGEF and PH domain-containing protein 3 (FGD3) from Pongo abelii (Sumatran orangutan).